Here is a 635-residue protein sequence, read N- to C-terminus: Membrane protein insertase YidC (635 aa).

A helical membrane pass occupies residues 8 to 28 (LILAMVLSALVMLVWSIFFAP). Residues 33–61 (PAQDTPAASTQGTAQPEAGGPATPGAVPQ) form a disordered region. 4 helical membrane-spanning segments follow: residues 396–416 (MIGN…LLVF), 470–490 (LPVL…FVTI), 528–548 (SFLH…SMWM), and 564–584 (IFAW…SGLV). The interval 615–635 (IRSSLPSRAKAGDKGGDKGGK) is disordered. Over residues 624–635 (KAGDKGGDKGGK) the composition is skewed to basic and acidic residues.

The protein belongs to the OXA1/ALB3/YidC family. Type 1 subfamily. Interacts with the Sec translocase complex via SecD. Specifically interacts with transmembrane segments of nascent integral membrane proteins during membrane integration.

The protein resides in the cell inner membrane. Required for the insertion and/or proper folding and/or complex formation of integral membrane proteins into the membrane. Involved in integration of membrane proteins that insert both dependently and independently of the Sec translocase complex, as well as at least some lipoproteins. Aids folding of multispanning membrane proteins. This chain is Membrane protein insertase YidC, found in Paracoccus denitrificans (strain Pd 1222).